We begin with the raw amino-acid sequence, 336 residues long: Tetraacyldisaccharide 4'-kinase (336 aa).

58-65 (AVGGSGKT) contacts ATP.

This sequence belongs to the LpxK family.

It carries out the reaction a lipid A disaccharide + ATP = a lipid IVA + ADP + H(+). The protein operates within glycolipid biosynthesis; lipid IV(A) biosynthesis; lipid IV(A) from (3R)-3-hydroxytetradecanoyl-[acyl-carrier-protein] and UDP-N-acetyl-alpha-D-glucosamine: step 6/6. Functionally, transfers the gamma-phosphate of ATP to the 4'-position of a tetraacyldisaccharide 1-phosphate intermediate (termed DS-1-P) to form tetraacyldisaccharide 1,4'-bis-phosphate (lipid IVA). This is Tetraacyldisaccharide 4'-kinase from Aromatoleum aromaticum (strain DSM 19018 / LMG 30748 / EbN1) (Azoarcus sp. (strain EbN1)).